A 132-amino-acid chain; its full sequence is Methylglyoxal synthase (132 aa).

Positions 1–132 (MNIALIAHDQ…LLEWREIEDK (132 aa)) constitute an MGS-like domain. Residues His-8 and Lys-12 each contribute to the substrate site. The active-site Proton donor/acceptor is Asp-60. A substrate-binding site is contributed by His-87.

The protein belongs to the methylglyoxal synthase family.

The enzyme catalyses dihydroxyacetone phosphate = methylglyoxal + phosphate. Its function is as follows. Catalyzes the formation of methylglyoxal from dihydroxyacetone phosphate. In Thermoanaerobacter pseudethanolicus (strain ATCC 33223 / 39E) (Clostridium thermohydrosulfuricum), this protein is Methylglyoxal synthase.